A 503-amino-acid polypeptide reads, in one-letter code: Putative FBD-associated F-box protein At5g56410 (503 aa).

In terms of domain architecture, F-box spans 2–50 (DKITGFSDDELLVKILSFLPTKAAVTTSILSKQWKFLWMRLPKLEYHDD). Positions 361–412 (FWEQMITSVPQCLLSSLQTFKWLGNGDSIEGKDLATFILRNSCQLKTATISI) constitute an FBD domain.

The polypeptide is Putative FBD-associated F-box protein At5g56410 (Arabidopsis thaliana (Mouse-ear cress)).